The sequence spans 620 residues: 1-deoxy-D-xylulose-5-phosphate synthase (620 aa).

Residues His-80 and 121-123 each bind thiamine diphosphate; that span reads GHS. Asp-152 provides a ligand contact to Mg(2+). Thiamine diphosphate contacts are provided by residues 153 to 154, Asn-181, Tyr-288, and Glu-370; that span reads GA. A Mg(2+)-binding site is contributed by Asn-181.

It belongs to the transketolase family. DXPS subfamily. As to quaternary structure, homodimer. Requires Mg(2+) as cofactor. Thiamine diphosphate is required as a cofactor.

The enzyme catalyses D-glyceraldehyde 3-phosphate + pyruvate + H(+) = 1-deoxy-D-xylulose 5-phosphate + CO2. Its pathway is metabolic intermediate biosynthesis; 1-deoxy-D-xylulose 5-phosphate biosynthesis; 1-deoxy-D-xylulose 5-phosphate from D-glyceraldehyde 3-phosphate and pyruvate: step 1/1. Its function is as follows. Catalyzes the acyloin condensation reaction between C atoms 2 and 3 of pyruvate and glyceraldehyde 3-phosphate to yield 1-deoxy-D-xylulose-5-phosphate (DXP). This chain is 1-deoxy-D-xylulose-5-phosphate synthase, found in Escherichia coli (strain SMS-3-5 / SECEC).